The following is an 86-amino-acid chain: Large ribosomal subunit protein bL31B (86 aa).

Belongs to the bacterial ribosomal protein bL31 family. Type B subfamily. As to quaternary structure, part of the 50S ribosomal subunit.

This chain is Large ribosomal subunit protein bL31B, found in Streptococcus agalactiae serotype III (strain NEM316).